The sequence spans 105 residues: Spermatogenesis-associated protein 8 (105 aa).

As to expression, expressed at high levels in adult testis, at moderate levels in sperm and at low levels in fetal testis. Not detected in other tissues.

The sequence is that of Spermatogenesis-associated protein 8 (SPATA8) from Homo sapiens (Human).